A 541-amino-acid polypeptide reads, in one-letter code: Circadian clock oscillator protein KaiC (541 aa).

Positions 1–40 are disordered; that stretch reads MNQSLGPSEPEKPQDNTAEDSTEPTPDNHRADLSELRGIP. 2 consecutive KaiC domains span residues 21-268 and 282-541; these read STEP…INIF and VRVS…EEGL. A compositionally biased stretch (basic and acidic residues) spans 26–35; it reads PDNHRADLSE. Residues glycine 70, threonine 71, glycine 72, lysine 73, threonine 74, leucine 75, serine 110, lysine 245, leucine 246, arginine 247, threonine 249, histidine 251, threonine 261, threonine 311, glycine 312, threonine 313, glycine 314, lysine 315, and threonine 316 each coordinate ATP. Threonine 74 is a binding site for Mg(2+). Residues threonine 316 and glutamate 339 each coordinate Mg(2+). Tryptophan 352 is an ATP binding site. The residue at position 452 (serine 452) is a Phosphoserine; by autocatalysis. A Phosphothreonine; by autocatalysis modification is found at threonine 453. Residues arginine 472, lysine 478, methionine 479, arginine 480, serine 482, histidine 484, and lysine 486 each coordinate ATP.

It belongs to the KaiC family. As to quaternary structure, homohexamer; hexamerization is dependent on ATP-binding. The KaiABC complex composition changes during the circadian cycle to control KaiC phosphorylation. Complexes KaiC(6), KaiA(2-4):KaiC(6), KaiB(6):KaiC(6) and KaiC(6):KaiB(6):KaiA(12) are among the most important forms, many form cooperatively. KaiC interacts with SasA, activating its autokinase function and leading to RpaA activation. It depends on Mg(2+) as a cofactor. In terms of processing, phosphorylated on serine and threonine residues by autocatalysis. Has a 4 step phosphorylation cycle; the autokinase acts first on Thr-453, then Ser-452. When Ser-452 is modified KaiC switches to an autophosphatase mode, acting first on phospho-Thr-453 then phospho-Ser-452.

The enzyme catalyses L-seryl-[protein] + ATP = O-phospho-L-seryl-[protein] + ADP + H(+). The catalysed reaction is L-threonyl-[protein] + ATP = O-phospho-L-threonyl-[protein] + ADP + H(+). It carries out the reaction ATP + H2O = ADP + phosphate + H(+). With respect to regulation, the interaction with KaiA enhances its phosphorylation status, while the interaction with KaiB decreases it. In terms of biological role, central component of the KaiABC oscillator complex, which constitutes the main circadian regulator in cyanobacteria. Complex composition changes during the circadian cycle to control KaiC phosphorylation. KaiA stimulates KaiC autophosphorylation, while KaiB sequesters KaiA, leading to KaiC autodephosphorylation. Clock output pathways impact the RpaA transcriptional regulator. KaiC enhances the autophosphorylation activity of SasA, which then transfers its phosphate group to RpaA to activate it. KaiB and KaiC together enhance the phospho-RpaA dephosphatase activity of CikA. Its function is as follows. Has a weak, temperature-independent ATPase activity; ATPase activity defines the circadian period. The phosphorylation state of KaiC modulates its ATPase activity and effects KaiB binding. The chain is Circadian clock oscillator protein KaiC from Parathermosynechococcus lividus (Thermostichus lividus).